Consider the following 962-residue polypeptide: Activity-dependent neuroprotective protein 2a (962 aa).

Residues 75–98 (LCCSLCWYSSRSVPTFRSHIHRCH) form a C2H2-type 1 zinc finger. A C2H2-type 2; degenerate zinc finger spans residues 108-130 (LMCPYCPFVSSPKVTEQHIQFFH). The C2H2-type 3; degenerate zinc-finger motif lies at 165–188 (YTCATCGYHDSLLYVMKKHVLVNH). Residues 219–244 (YHCKLCKLPAETIEHLLYHILSSEKH) form a C2H2-type 4 zinc finger. Residues 527 to 547 (VKCLRCKILLTEQGIFQHLLH) form a C2H2-type 5; degenerate zinc finger. 2 consecutive C2H2-type zinc fingers follow at residues 549–572 (LKCLFCPQMFYSFKQIMEHSKKEH) and 650–673 (NACPFCQVKLQNPEDYELHLQTKH). The segment at 688–712 (YKCIYCFGVYTEKSTPKTISIHVQR) adopts a C2H2-type 8; degenerate zinc-finger fold. Positions 753–781 (QGAPEFPKPKKEAVTPRNRRRNTKASKTG) are disordered. Residues 795-854 (PMGMERTSFEDRKDFLSQYFHRKPYVTKTEIELLASRLWINKADVKAHFNSKLTKCLKAI) constitute a DNA-binding region (homeobox).

It is found in the nucleus. May be involved in transcriptional regulation. Required for progression through late erythroid differentiation. May be involved in vasculogenesis. The sequence is that of Activity-dependent neuroprotective protein 2a from Danio rerio (Zebrafish).